A 132-amino-acid chain; its full sequence is Fatty acid-binding protein, liver (132 aa).

Val1 bears the N-acetylvaline mark. At Tyr19 the chain carries Phosphotyrosine; by Tyr-kinases.

The protein belongs to the calycin superfamily. Fatty-acid binding protein (FABP) family.

It localises to the cytoplasm. In terms of biological role, FABPs are thought to play a role in the intracellular transport of long-chain fatty acids and their acyl-CoA esters. This is Fatty acid-binding protein, liver from Ginglymostoma cirratum (Nurse shark).